We begin with the raw amino-acid sequence, 140 residues long: MLMPKRTKYRRPHRLSYEGKVKGKNLIVNGNYGLIAQEGNWITNKQIEAARIAMTRHMKRTGKVWINIFPHLSLTRKPLEVRMGSGKGAPEEWVAVVKKGKVLFEVSDLNNSVKAELEALRLASHKLPIKTKIVKKGEQK.

Belongs to the universal ribosomal protein uL16 family. In terms of assembly, part of the 50S ribosomal subunit.

In terms of biological role, binds 23S rRNA and is also seen to make contacts with the A and possibly P site tRNAs. The chain is Large ribosomal subunit protein uL16 from Phytoplasma mali (strain AT).